Here is a 1396-residue protein sequence, read N- to C-terminus: Sterol 3-beta-glucosyltransferase (1396 aa).

Residues 1–16 are compositionally biased toward basic and acidic residues; the sequence is MRPLLDEAKRRVDRRL. Disordered stretches follow at residues 1–59, 82–193, and 206–233; these read MRPL…TKEG, HARF…AAPV, and SKGSMNQSPRSPPAETQEEQSQEQTSAS. Positions 18-28 are enriched in polar residues; the sequence is ASRQSLSTSRI. 2 stretches are compositionally biased toward basic and acidic residues: residues 35-44 and 82-108; these read ERLKDDHDAQ and HARFDDSSDSERDTDRPPQKRTEKESQ. A compositionally biased stretch (polar residues) spans 156-175; it reads GSSQRQGGAQTEPSTGNQMS. In terms of domain architecture, GRAM 1 spans 237 to 288; that stretch reads LRLMEMFGFESPEKVLVEYACSLVQSMLLQGYMYVTEGHICFYAYLPRKSTV. The PH domain occupies 289-387; the sequence is AIKSGYLYKR…WVKSLQKVIF (99 aa). 2 stretches are compositionally biased toward polar residues: residues 459–479 and 487–497; these read QAKNPSRESPQPGRTTPQSRA and SLTSGLSQVLG. 2 disordered regions span residues 459–531 and 576–635; these read QAKN…RDLS and FRRQ…VQQS. The segment covering 585–595 has biased composition (basic and acidic residues); the sequence is QFGRRHSDETA. The 67-residue stretch at 719-785 folds into the GRAM 2 domain; it reads DRFRAHFALP…KDVENVEKEK (67 aa). Residues 841 to 880 form a disordered region; it reads EQDESEAAKAEHRMLQEARKDASGGLIPQTPSDESPEIHP. Residues 846 to 862 show a composition bias toward basic and acidic residues; sequence EAAKAEHRMLQEARKDA. Residues S907, R908, D910, A1210, H1212, H1225, G1229, T1230, D1249, and Q1250 each contribute to the UDP-alpha-D-glucose site.

Belongs to the glycosyltransferase 28 family.

Its subcellular location is the cytoplasm. The protein resides in the preautophagosomal structure membrane. It catalyses the reaction a sterol + UDP-alpha-D-glucose = a sterol 3-beta-D-glucoside + UDP + H(+). The catalysed reaction is ergosterol + UDP-alpha-D-glucose = ergosteryl 3-beta-D-glucoside + UDP + H(+). Its function is as follows. Sterol glycosyltransferase responsible for the glycosylation of ergosterol to form ergosterol-glucoside. This Aspergillus terreus (strain NIH 2624 / FGSC A1156) protein is Sterol 3-beta-glucosyltransferase.